The primary structure comprises 211 residues: Probable calcium-binding protein CML11 (211 aa).

2 disordered regions span residues 1 to 22 and 40 to 60; these read MSEP…AAAT and SCSA…LGDD. Residues 44 to 53 show a composition bias toward low complexity; sequence QQQQQQQQQQ. EF-hand domains lie at 60-95, 96-131, 136-171, and 172-207; these read DQLG…LGLK, PSTD…ELLY, YSED…LGHA, and LTVK…AAFD. Ca(2+)-binding residues include aspartate 73, asparagine 75, aspartate 77, serine 79, glutamate 84, aspartate 109, asparagine 111, asparagine 113, glutamate 120, aspartate 149, aspartate 151, asparagine 153, glutamate 160, aspartate 185, aspartate 187, aspartate 189, arginine 191, and glutamate 196.

In terms of biological role, potential calcium sensor. This chain is Probable calcium-binding protein CML11 (CML11), found in Oryza sativa subsp. japonica (Rice).